Consider the following 481-residue polypeptide: 2-succinylbenzoate--CoA ligase (481 aa).

This sequence belongs to the ATP-dependent AMP-binding enzyme family. MenE subfamily.

It carries out the reaction 2-succinylbenzoate + ATP + CoA = 2-succinylbenzoyl-CoA + AMP + diphosphate. The protein operates within quinol/quinone metabolism; 1,4-dihydroxy-2-naphthoate biosynthesis; 1,4-dihydroxy-2-naphthoate from chorismate: step 5/7. It participates in quinol/quinone metabolism; menaquinone biosynthesis. Its function is as follows. Converts 2-succinylbenzoate (OSB) to 2-succinylbenzoyl-CoA (OSB-CoA). This Bacillus cereus (strain ATCC 10987 / NRS 248) protein is 2-succinylbenzoate--CoA ligase.